A 181-amino-acid chain; its full sequence is Large ribosomal subunit protein uL16 (181 aa).

It belongs to the universal ribosomal protein uL16 family. As to quaternary structure, part of the 50S ribosomal subunit.

The sequence is that of Large ribosomal subunit protein uL16 from Pyrococcus furiosus (strain ATCC 43587 / DSM 3638 / JCM 8422 / Vc1).